A 346-amino-acid polypeptide reads, in one-letter code: Probable dual-specificity RNA methyltransferase RlmN (346 aa).

Residue glutamate 76 is the Proton acceptor of the active site. A Radical SAM core domain is found at 97 to 329 (SYDRATICVS…TFIRKPRGRD (233 aa)). Cysteine 104 and cysteine 334 are disulfide-bonded. [4Fe-4S] cluster is bound by residues cysteine 111, cysteine 115, and cysteine 118. S-adenosyl-L-methionine contacts are provided by residues 162–163 (GE), serine 192, 215–217 (SLN), and asparagine 291. Cysteine 334 (S-methylcysteine intermediate) is an active-site residue.

This sequence belongs to the radical SAM superfamily. RlmN family. [4Fe-4S] cluster serves as cofactor.

The protein resides in the cytoplasm. The catalysed reaction is adenosine(2503) in 23S rRNA + 2 reduced [2Fe-2S]-[ferredoxin] + 2 S-adenosyl-L-methionine = 2-methyladenosine(2503) in 23S rRNA + 5'-deoxyadenosine + L-methionine + 2 oxidized [2Fe-2S]-[ferredoxin] + S-adenosyl-L-homocysteine. The enzyme catalyses adenosine(37) in tRNA + 2 reduced [2Fe-2S]-[ferredoxin] + 2 S-adenosyl-L-methionine = 2-methyladenosine(37) in tRNA + 5'-deoxyadenosine + L-methionine + 2 oxidized [2Fe-2S]-[ferredoxin] + S-adenosyl-L-homocysteine. Specifically methylates position 2 of adenine 2503 in 23S rRNA and position 2 of adenine 37 in tRNAs. The polypeptide is Probable dual-specificity RNA methyltransferase RlmN (Koribacter versatilis (strain Ellin345)).